Consider the following 226-residue polypeptide: ATP synthase F(0) complex subunit a (226 aa).

6 helical membrane-spanning segments follow: residues Phe6 to Phe26, Trp68 to Leu88, Gln97 to Phe117, Ile138 to Val158, Ile164 to Ile184, and Ala189 to Ile209.

It belongs to the ATPase A chain family. As to quaternary structure, component of the ATP synthase complex composed at least of ATP5F1A/subunit alpha, ATP5F1B/subunit beta, ATP5MC1/subunit c (homooctomer), MT-ATP6/subunit a, MT-ATP8/subunit 8, ATP5ME/subunit e, ATP5MF/subunit f, ATP5MG/subunit g, ATP5MK/subunit k, ATP5MJ/subunit j, ATP5F1C/subunit gamma, ATP5F1D/subunit delta, ATP5F1E/subunit epsilon, ATP5PF/subunit F6, ATP5PB/subunit b, ATP5PD/subunit d, ATP5PO/subunit OSCP. ATP synthase complex consists of a soluble F(1) head domain (subunits alpha(3) and beta(3)) - the catalytic core - and a membrane F(0) domain - the membrane proton channel (subunits c, a, 8, e, f, g, k and j). These two domains are linked by a central stalk (subunits gamma, delta, and epsilon) rotating inside the F1 region and a stationary peripheral stalk (subunits F6, b, d, and OSCP). Interacts with DNAJC30; interaction is direct.

It localises to the mitochondrion inner membrane. The enzyme catalyses H(+)(in) = H(+)(out). Functionally, subunit a, of the mitochondrial membrane ATP synthase complex (F(1)F(0) ATP synthase or Complex V) that produces ATP from ADP in the presence of a proton gradient across the membrane which is generated by electron transport complexes of the respiratory chain. ATP synthase complex consist of a soluble F(1) head domain - the catalytic core - and a membrane F(1) domain - the membrane proton channel. These two domains are linked by a central stalk rotating inside the F(1) region and a stationary peripheral stalk. During catalysis, ATP synthesis in the catalytic domain of F(1) is coupled via a rotary mechanism of the central stalk subunits to proton translocation. With the subunit c (ATP5MC1), forms the proton-conducting channel in the F(0) domain, that contains two crucial half-channels (inlet and outlet) that facilitate proton movement from the mitochondrial intermembrane space (IMS) into the matrix. Protons are taken up via the inlet half-channel and released through the outlet half-channel, following a Grotthuss mechanism. This chain is ATP synthase F(0) complex subunit a, found in Rattus norvegicus (Rat).